We begin with the raw amino-acid sequence, 93 residues long: Small hydrophobic protein (93 aa).

2 consecutive transmembrane segments (helical) span residues 5 to 25 (LIII…VLAY) and 32 to 52 (AFGP…IYFP).

Its subcellular location is the membrane. This Tupaia virus (isolate Tupaia/Thailand/-/1986) (TUPV) protein is Small hydrophobic protein.